A 483-amino-acid chain; its full sequence is Glycogen synthase (483 aa).

Residue lysine 15 participates in ADP-alpha-D-glucose binding.

The protein belongs to the glycosyltransferase 1 family. Bacterial/plant glycogen synthase subfamily.

The enzyme catalyses [(1-&gt;4)-alpha-D-glucosyl](n) + ADP-alpha-D-glucose = [(1-&gt;4)-alpha-D-glucosyl](n+1) + ADP + H(+). Its pathway is glycan biosynthesis; glycogen biosynthesis. Its function is as follows. Synthesizes alpha-1,4-glucan chains using ADP-glucose. In Thioalkalivibrio sulfidiphilus (strain HL-EbGR7), this protein is Glycogen synthase.